We begin with the raw amino-acid sequence, 648 residues long: Threonine--tRNA ligase (648 aa).

In terms of domain architecture, TGS spans 1 to 63 (MTEINIEFPD…NENVKIEIVT (63 aa)). The catalytic stretch occupies residues 243 to 541 (DHRVIGNNLD…LIEMYKGAFP (299 aa)). Positions 337, 388, and 518 each coordinate Zn(2+).

Belongs to the class-II aminoacyl-tRNA synthetase family. Homodimer. Zn(2+) serves as cofactor.

It localises to the cytoplasm. It catalyses the reaction tRNA(Thr) + L-threonine + ATP = L-threonyl-tRNA(Thr) + AMP + diphosphate + H(+). In terms of biological role, catalyzes the attachment of threonine to tRNA(Thr) in a two-step reaction: L-threonine is first activated by ATP to form Thr-AMP and then transferred to the acceptor end of tRNA(Thr). Also edits incorrectly charged L-seryl-tRNA(Thr). The protein is Threonine--tRNA ligase of Pediococcus pentosaceus (strain ATCC 25745 / CCUG 21536 / LMG 10740 / 183-1w).